The chain runs to 221 residues: Probable glutathione S-transferase parC (221 aa).

The GST N-terminal domain maps to 4–83 (EEVILLDFWP…YIEEVWKDKA (80 aa)). Residues serine 14, lysine 41, isoleucine 55, and 67 to 68 (ES) contribute to the glutathione site. The 125-residue stretch at 90–214 (DPYDRAQARF…PKVLEFVKVL (125 aa)) folds into the GST C-terminal domain.

Belongs to the GST superfamily. Phi family. In terms of tissue distribution, abundant in seedlings and roots. It is also found in the shoot tips, flowers and leaves.

It carries out the reaction RX + glutathione = an S-substituted glutathione + a halide anion + H(+). Conjugation of reduced glutathione to a wide number of exogenous and endogenous hydrophobic electrophiles. The chain is Probable glutathione S-transferase parC (PARC) from Nicotiana tabacum (Common tobacco).